Reading from the N-terminus, the 366-residue chain is Protein sigma-NS (366 aa).

Positions 1-11 (MASSLRAAISK) are important for ssRNA-binding and formation of complexes.

This sequence belongs to the orthoreovirus sigma-NS protein family. Homooligomer; in presence of RNA. Interacts with protein mu-NS; this interaction allows the localization of sigma-NS to the viral factories. Interacts with host G3BP1 (via C-terminus); this interaction induces the relocalization of G3BP1 and other SG proteins to the viral factories periphery.

Its subcellular location is the host cytoplasm. Its function is as follows. Protein that binds to ssRNA and participates with protein mu-NS in forming the matrix of viral factories, which are large inclusions in the host cytoplasm where replication intermediates are assembled and viral RNA replication takes place. Plays a role in the inhibition of the integrated stress response (ISR) to escape from host cell translational shutoff. Participates in the disruption of stress granules (SG) through its association with host G3BP1 and mu-NS. This Mammalia (T2J) protein is Protein sigma-NS (S3).